The primary structure comprises 296 residues: Cytidine deaminase (296 aa).

2 CMP/dCMP-type deaminase domains span residues 47–167 (TEAE…FGPK) and 186–296 (DSSD…VDPV). A substrate-binding site is contributed by 88–90 (NLE). Residue histidine 101 coordinates Zn(2+). The active-site Proton donor is glutamate 103. Residues cysteine 128 and cysteine 131 each coordinate Zn(2+).

It belongs to the cytidine and deoxycytidylate deaminase family. Homodimer. Zn(2+) serves as cofactor.

The enzyme catalyses cytidine + H2O + H(+) = uridine + NH4(+). The catalysed reaction is 2'-deoxycytidine + H2O + H(+) = 2'-deoxyuridine + NH4(+). In terms of biological role, this enzyme scavenges exogenous and endogenous cytidine and 2'-deoxycytidine for UMP synthesis. In Shewanella sp. (strain W3-18-1), this protein is Cytidine deaminase.